The following is a 324-amino-acid chain: MSNEVEQKKNIKTINDLPGISQTVINKLIEAGYSSLETLAVASPQDLSVAAGIPLSTAQKIIKEARDALDIRFKTALEVKKERMNVKKISTGSQALDGLLAGGIETRTMTEFFGEFGSGKTQLCHQLSVNVQLPPEKGGLSGKAVYIDTEGTFRWERIENMAKALGLDIDNVMNNIYYIRAINTDHQIAIVDDLQELVSKDPSIKLIVVDSVTSHFRAEYPGRENLAVRQQKLNKHLHQLTRLAEVYDIAVIITNQVMARPDMFYGDPTVAVGGHTLYHVPGIRIQLKKSRGNRRIARVVDAPHLPEGEVVFALTEEGIRDAEE.

An ATP-binding site is contributed by 114–121 (GEFGSGKT).

It belongs to the eukaryotic RecA-like protein family.

In terms of biological role, involved in DNA repair and in homologous recombination. Binds and assemble on single-stranded DNA to form a nucleoprotein filament. Hydrolyzes ATP in a ssDNA-dependent manner and promotes DNA strand exchange between homologous DNA molecules. The sequence is that of DNA repair and recombination protein RadA (radA) from Saccharolobus solfataricus (strain ATCC 35092 / DSM 1617 / JCM 11322 / P2) (Sulfolobus solfataricus).